The primary structure comprises 342 residues: tRNA N6-adenosine threonylcarbamoyltransferase (342 aa).

The Fe cation site is built by His112 and His116. Substrate contacts are provided by residues 134-138 (IVSGG), Asp167, Gly180, and Asn278. A Fe cation-binding site is contributed by Asp306.

Belongs to the KAE1 / TsaD family. Fe(2+) serves as cofactor.

Its subcellular location is the cytoplasm. It carries out the reaction L-threonylcarbamoyladenylate + adenosine(37) in tRNA = N(6)-L-threonylcarbamoyladenosine(37) in tRNA + AMP + H(+). Functionally, required for the formation of a threonylcarbamoyl group on adenosine at position 37 (t(6)A37) in tRNAs that read codons beginning with adenine. Is involved in the transfer of the threonylcarbamoyl moiety of threonylcarbamoyl-AMP (TC-AMP) to the N6 group of A37, together with TsaE and TsaB. TsaD likely plays a direct catalytic role in this reaction. The polypeptide is tRNA N6-adenosine threonylcarbamoyltransferase (Anaplasma phagocytophilum (strain HZ)).